The chain runs to 295 residues: Cyclin-G1 (295 aa).

It belongs to the cyclin family. Cyclin G subfamily.

It localises to the nucleus. Its function is as follows. May play a role in growth regulation. Is associated with G2/M phase arrest in response to DNA damage. May be an intermediate by which p53 mediates its role as an inhibitor of cellular proliferation. This Sus scrofa (Pig) protein is Cyclin-G1 (CCNG1).